The following is a 78-amino-acid chain: Acyl carrier protein (78 aa).

One can recognise a Carrier domain in the interval 2–77; it reads SDTADRVKKI…DAIKYIDENK (76 aa). Position 37 is an O-(pantetheine 4'-phosphoryl)serine (S37).

The protein belongs to the acyl carrier protein (ACP) family. 4'-phosphopantetheine is transferred from CoA to a specific serine of apo-ACP by AcpS. This modification is essential for activity because fatty acids are bound in thioester linkage to the sulfhydryl of the prosthetic group.

It localises to the cytoplasm. It functions in the pathway lipid metabolism; fatty acid biosynthesis. Its function is as follows. Carrier of the growing fatty acid chain in fatty acid biosynthesis. The sequence is that of Acyl carrier protein from Novosphingobium aromaticivorans (strain ATCC 700278 / DSM 12444 / CCUG 56034 / CIP 105152 / NBRC 16084 / F199).